The following is a 444-amino-acid chain: Phosphoglucosamine mutase (444 aa).

The active-site Phosphoserine intermediate is the Ser-102. 4 residues coordinate Mg(2+): Ser-102, Asp-241, Asp-243, and Asp-245. Ser-102 carries the post-translational modification Phosphoserine.

It belongs to the phosphohexose mutase family. The cofactor is Mg(2+). In terms of processing, activated by phosphorylation.

It catalyses the reaction alpha-D-glucosamine 1-phosphate = D-glucosamine 6-phosphate. Catalyzes the conversion of glucosamine-6-phosphate to glucosamine-1-phosphate. The protein is Phosphoglucosamine mutase of Mannheimia succiniciproducens (strain KCTC 0769BP / MBEL55E).